The chain runs to 100 residues: Suppressor of silencing 2b (100 aa).

The Nuclear localization signal motif lies at 22–27; sequence KRRRRR.

Belongs to the cucumovirus/ilarvirus protein 2b family. In terms of assembly, homotetramer. Interacts with host AGO1; this interaction blocks AGO1 cleavage activity to attenuate RNA silencing and thus counter host defense. Interacts with host JAZ.

The protein resides in the host nucleus. In terms of biological role, multifunctional protein that plays two independent roles: viral suppressor of host RNAi (VSR) and viral inducer of host attractiveness to insect vectors (VIA). Acts as a suppressor of RNA-mediated gene silencing, also known as post-transcriptional gene silencing (PTGS), a mechanism of plant viral defense that limits the accumulation of viral RNAs. May directly interfere with mobile silencing signaling. Also inhibits signal transduction by the phytohormone jasmonate, making the infected plant more attractive to aphids, which are the second host to play a role as a dissemination vector. Acts by binding to and inhibiting JAZ degradation in the host. In Cucumis sativus (Cucumber), this protein is Suppressor of silencing 2b.